The following is a 60-amino-acid chain: Beta-toxin BotIT2 (60 aa).

Residues 1–60 form the LCN-type CS-alpha/beta domain; the sequence is DGYIKGYKGCKITCVINDDYCDTECKAEGGTYGYCWKWGLACWCEDLPDEKRWKSETNTC. 4 disulfide bridges follow: cysteine 10–cysteine 60, cysteine 14–cysteine 35, cysteine 21–cysteine 42, and cysteine 25–cysteine 44.

Belongs to the long (4 C-C) scorpion toxin superfamily. Sodium channel inhibitor family. Beta subfamily. In terms of tissue distribution, expressed by the venom gland.

Its subcellular location is the secreted. In terms of biological role, beta toxins bind voltage-independently at site-4 of sodium channels (Nav) and shift the voltage of activation toward more negative potentials thereby affecting sodium channel activation and promoting spontaneous and repetitive firing. This toxin specifically acts by inducing a new current with very slow activation/deactivation kinetics due to the transformation of normal fast channels into slow ones. It possess properties of excitatory and depressant toxins. It is highly active on insects and less active on mammals. This Buthus occitanus tunetanus (Common European scorpion) protein is Beta-toxin BotIT2.